Reading from the N-terminus, the 239-residue chain is Uridylate kinase (239 aa).

Residue 12–15 participates in ATP binding; that stretch reads KLSG. The segment at 20–25 is involved in allosteric activation by GTP; it reads GEKGFG. UMP is bound at residue G54. ATP-binding residues include G55 and R59. Residues D72 and 133–140 each bind UMP; that span reads TGNPFFST. Residues Y166 and D169 each coordinate ATP.

Belongs to the UMP kinase family. Homohexamer.

The protein localises to the cytoplasm. It catalyses the reaction UMP + ATP = UDP + ADP. The protein operates within pyrimidine metabolism; CTP biosynthesis via de novo pathway; UDP from UMP (UMPK route): step 1/1. Allosterically activated by GTP. Inhibited by UTP. In terms of biological role, catalyzes the reversible phosphorylation of UMP to UDP. This Caldicellulosiruptor saccharolyticus (strain ATCC 43494 / DSM 8903 / Tp8T 6331) protein is Uridylate kinase.